Reading from the N-terminus, the 90-residue chain is DNA-binding protein HU-alpha (90 aa).

It belongs to the bacterial histone-like protein family. Heterodimer of an alpha and a beta chain.

Functionally, histone-like DNA-binding protein which is capable of wrapping DNA to stabilize it, and thus to prevent its denaturation under extreme environmental conditions. In Vibrio proteolyticus (Aeromonas proteolytica), this protein is DNA-binding protein HU-alpha (hupA).